We begin with the raw amino-acid sequence, 247 residues long: Adenosylcobinamide-GDP ribazoletransferase (247 aa).

Helical transmembrane passes span 34–54, 59–79, 113–133, 138–158, and 194–214; these read IVMF…IFIL, CGIP…TGGF, GGLA…ELAL, VLAA…LLMY, and VLLP…AIFI.

The protein belongs to the CobS family. Requires Mg(2+) as cofactor.

The protein resides in the cell inner membrane. It catalyses the reaction alpha-ribazole + adenosylcob(III)inamide-GDP = adenosylcob(III)alamin + GMP + H(+). The enzyme catalyses alpha-ribazole 5'-phosphate + adenosylcob(III)inamide-GDP = adenosylcob(III)alamin 5'-phosphate + GMP + H(+). Its pathway is cofactor biosynthesis; adenosylcobalamin biosynthesis; adenosylcobalamin from cob(II)yrinate a,c-diamide: step 7/7. In terms of biological role, joins adenosylcobinamide-GDP and alpha-ribazole to generate adenosylcobalamin (Ado-cobalamin). Also synthesizes adenosylcobalamin 5'-phosphate from adenosylcobinamide-GDP and alpha-ribazole 5'-phosphate. The protein is Adenosylcobinamide-GDP ribazoletransferase of Salmonella arizonae (strain ATCC BAA-731 / CDC346-86 / RSK2980).